Here is a 322-residue protein sequence, read N- to C-terminus: 4-hydroxy-3-methylbut-2-enyl diphosphate reductase (322 aa).

Position 15 (cysteine 15) interacts with [4Fe-4S] cluster. Residues histidine 44 and histidine 77 each contribute to the (2E)-4-hydroxy-3-methylbut-2-enyl diphosphate site. 2 residues coordinate dimethylallyl diphosphate: histidine 44 and histidine 77. The isopentenyl diphosphate site is built by histidine 44 and histidine 77. Position 99 (cysteine 99) interacts with [4Fe-4S] cluster. Histidine 127 is a binding site for (2E)-4-hydroxy-3-methylbut-2-enyl diphosphate. Dimethylallyl diphosphate is bound at residue histidine 127. Residue histidine 127 coordinates isopentenyl diphosphate. Catalysis depends on glutamate 129, which acts as the Proton donor. Threonine 168 serves as a coordination point for (2E)-4-hydroxy-3-methylbut-2-enyl diphosphate. Position 198 (cysteine 198) interacts with [4Fe-4S] cluster. (2E)-4-hydroxy-3-methylbut-2-enyl diphosphate-binding residues include serine 226, serine 227, asparagine 228, and serine 270. 4 residues coordinate dimethylallyl diphosphate: serine 226, serine 227, asparagine 228, and serine 270. 4 residues coordinate isopentenyl diphosphate: serine 226, serine 227, asparagine 228, and serine 270.

This sequence belongs to the IspH family. [4Fe-4S] cluster serves as cofactor.

It catalyses the reaction isopentenyl diphosphate + 2 oxidized [2Fe-2S]-[ferredoxin] + H2O = (2E)-4-hydroxy-3-methylbut-2-enyl diphosphate + 2 reduced [2Fe-2S]-[ferredoxin] + 2 H(+). It carries out the reaction dimethylallyl diphosphate + 2 oxidized [2Fe-2S]-[ferredoxin] + H2O = (2E)-4-hydroxy-3-methylbut-2-enyl diphosphate + 2 reduced [2Fe-2S]-[ferredoxin] + 2 H(+). It participates in isoprenoid biosynthesis; dimethylallyl diphosphate biosynthesis; dimethylallyl diphosphate from (2E)-4-hydroxy-3-methylbutenyl diphosphate: step 1/1. Its pathway is isoprenoid biosynthesis; isopentenyl diphosphate biosynthesis via DXP pathway; isopentenyl diphosphate from 1-deoxy-D-xylulose 5-phosphate: step 6/6. In terms of biological role, catalyzes the conversion of 1-hydroxy-2-methyl-2-(E)-butenyl 4-diphosphate (HMBPP) into a mixture of isopentenyl diphosphate (IPP) and dimethylallyl diphosphate (DMAPP). Acts in the terminal step of the DOXP/MEP pathway for isoprenoid precursor biosynthesis. This is 4-hydroxy-3-methylbut-2-enyl diphosphate reductase from Neisseria gonorrhoeae (strain ATCC 700825 / FA 1090).